A 493-amino-acid polypeptide reads, in one-letter code: NAD(P)H dehydrogenase (quinone) (493 aa).

FAD is bound by residues 12–13 (PA), 35–37 (DCD), 42–43 (AA), Lys-52, Gly-117, Asp-317, 324–325 (LA), and Tyr-450.

It belongs to the class-I pyridine nucleotide-disulfide oxidoreductase family. In terms of assembly, homotetramer. It depends on FAD as a cofactor.

It carries out the reaction a quinone + NADH + H(+) = a quinol + NAD(+). The catalysed reaction is a quinone + NADPH + H(+) = a quinol + NADP(+). Functionally, may contribute to virulence by increasing resistance to reactive oxygen intermediates. It can reduce 2,6-dimethyl-1,4-benzoquinone (DMBQ), 5-hydroxy-1,4-naphthaquinone (5-HNQ) and menadione. The sequence is that of NAD(P)H dehydrogenase (quinone) (lpdA) from Mycobacterium tuberculosis (strain CDC 1551 / Oshkosh).